Reading from the N-terminus, the 596-residue chain is Elongation factor 4 (596 aa).

A tr-type G domain is found at 2–184; it reads KHIRNFSIIA…VIVEQIPPPE (183 aa). Residues 14 to 19 and 131 to 134 each bind GTP; these read DHGKST and NKID.

Belongs to the TRAFAC class translation factor GTPase superfamily. Classic translation factor GTPase family. LepA subfamily.

Its subcellular location is the cell inner membrane. It catalyses the reaction GTP + H2O = GDP + phosphate + H(+). In terms of biological role, required for accurate and efficient protein synthesis under certain stress conditions. May act as a fidelity factor of the translation reaction, by catalyzing a one-codon backward translocation of tRNAs on improperly translocated ribosomes. Back-translocation proceeds from a post-translocation (POST) complex to a pre-translocation (PRE) complex, thus giving elongation factor G a second chance to translocate the tRNAs correctly. Binds to ribosomes in a GTP-dependent manner. The protein is Elongation factor 4 of Shewanella oneidensis (strain ATCC 700550 / JCM 31522 / CIP 106686 / LMG 19005 / NCIMB 14063 / MR-1).